The sequence spans 455 residues: MALWGGRFQGETSALFKLFNDSLPVDYRLFEQDVVGSIAWADAIASVGIITATECSDLKKALNELLVEVKGDPAIILASGAEDIHSFVESALIAKVGDLGKKLHTGRSRNDQVATDLKLWCQSEGAALVARLQTLRSELIALAEREFDAVMPGYTHLQRAQPVTFGHWCLAYVEMIERDLSRLTDALKRANTCPLGSGALAGTAYQMDRHALAAALNFASPTLNSLDSVSDRDHVVELCSTASISMIHLSRMAEDLIFFNSGEAGFISLSDEVTSGSSLMPQKKNPDALELIRGKTGRVYGSLVGILTTMKALPLAYNKDMQEDKEGLFDVVDSWAICLDMAALVLSGLVVNRPNALLAAQQGYANATELADYLVSKGMPFREAHHVVGVAVVAAIAKKIPLEGFTLAEFKTFADIIEDDVYPNLTIEACLAKRDVLGGTALTQVKQAISAKKIV.

The protein belongs to the lyase 1 family. Argininosuccinate lyase subfamily.

It is found in the cytoplasm. It catalyses the reaction 2-(N(omega)-L-arginino)succinate = fumarate + L-arginine. It functions in the pathway amino-acid biosynthesis; L-arginine biosynthesis; L-arginine from L-ornithine and carbamoyl phosphate: step 3/3. The polypeptide is Argininosuccinate lyase (Shewanella sp. (strain ANA-3)).